The following is an 824-amino-acid chain: Acyl-homoserine lactone acylase QuiP (824 aa).

The signal sequence occupies residues 1-26; it reads MASPALRHFLPRFGAAAAAASFLSLA. The active-site Nucleophile is the serine 264.

It belongs to the peptidase S45 family. As to quaternary structure, heterodimer of an alpha subunit and a beta subunit processed from the same precursor.

Its subcellular location is the periplasm. The enzyme catalyses an N-acyl-L-homoserine lactone + H2O = L-homoserine lactone + a carboxylate. Functionally, catalyzes the deacylation of acyl-homoserine lactone (AHL or acyl-HSL), releasing homoserine lactone (HSL) and the corresponding fatty acid. Possesses a specificity for the degradation of long-chain acyl-HSLs (side chains of seven or more carbons in length). This chain is Acyl-homoserine lactone acylase QuiP (quiP), found in Pseudomonas syringae pv. tomato (strain ATCC BAA-871 / DC3000).